The chain runs to 253 residues: Imidazole glycerol phosphate synthase subunit HisF (253 aa).

Residues aspartate 11 and aspartate 130 contribute to the active site.

The protein belongs to the HisA/HisF family. Heterodimer of HisH and HisF.

The protein localises to the cytoplasm. It carries out the reaction 5-[(5-phospho-1-deoxy-D-ribulos-1-ylimino)methylamino]-1-(5-phospho-beta-D-ribosyl)imidazole-4-carboxamide + L-glutamine = D-erythro-1-(imidazol-4-yl)glycerol 3-phosphate + 5-amino-1-(5-phospho-beta-D-ribosyl)imidazole-4-carboxamide + L-glutamate + H(+). Its pathway is amino-acid biosynthesis; L-histidine biosynthesis; L-histidine from 5-phospho-alpha-D-ribose 1-diphosphate: step 5/9. Functionally, IGPS catalyzes the conversion of PRFAR and glutamine to IGP, AICAR and glutamate. The HisF subunit catalyzes the cyclization activity that produces IGP and AICAR from PRFAR using the ammonia provided by the HisH subunit. In Dinoroseobacter shibae (strain DSM 16493 / NCIMB 14021 / DFL 12), this protein is Imidazole glycerol phosphate synthase subunit HisF.